The following is a 101-amino-acid chain: Floral defensin-like protein 2 (101 aa).

Positions 1–25 (MARSICFFAVAILALMLFAAYETEA) are cleaved as a signal peptide. Disulfide bonds link Cys28/Cys74, Cys32/Cys48, Cys39/Cys61, Cys45/Cys68, and Cys49/Cys70. Positions 75–101 (ATEEATATLANEVKTMAEALVEEDMME) are cleaved as a propeptide — removed in mature form.

It belongs to the DEFL family. In terms of processing, when compared to other plant defensins, the petunia defensins have an additional fifth disulfide bond. Petals.

Its subcellular location is the secreted. The protein resides in the vacuole. In terms of biological role, plant defense peptide with antifungal activity against F.oxysporum and B.cinerea. The sequence is that of Floral defensin-like protein 2 (D2) from Petunia hybrida (Petunia).